The following is a 251-amino-acid chain: Haloacid dehalogenase-like hydrolase domain-containing protein 3 (251 aa).

Lys-15 is modified (N6-acetyllysine; alternate). N6-succinyllysine; alternate is present on Lys-15. Lys-130 bears the N6-acetyllysine mark.

The protein belongs to the HAD-like hydrolase superfamily.

The protein is Haloacid dehalogenase-like hydrolase domain-containing protein 3 (Hdhd3) of Mus musculus (Mouse).